We begin with the raw amino-acid sequence, 115 residues long: MLKETIRSGDWKGEKHVPVIEYEREGDLVKVEVSVGKEIPHPNTPEHHIAWIELYFHPEGGQFPILVGRVEFTNHSDPLTEPRAVFFFKTSKKGKLYALSYCNIHGLWENEVQLE.

Glutamate 14, histidine 16, histidine 41, histidine 47, cysteine 102, and histidine 105 together coordinate Fe cation.

The protein belongs to the desulfoferrodoxin family. In terms of assembly, homotetramer. Requires Fe cation as cofactor.

It catalyses the reaction reduced [rubredoxin] + superoxide + 2 H(+) = oxidized [rubredoxin] + H2O2. Functionally, uses electrons from reduced NADP, by way of rubredoxin and an oxidoreductase, to catalyze the reduction of superoxide to hydrogen peroxide. The chain is Superoxide reductase (sorA) from Pyrococcus horikoshii (strain ATCC 700860 / DSM 12428 / JCM 9974 / NBRC 100139 / OT-3).